Reading from the N-terminus, the 344-residue chain is Protein RecA (344 aa).

65–72 lines the ATP pocket; sequence GPESSGKT.

The protein belongs to the RecA family.

It is found in the cytoplasm. In terms of biological role, can catalyze the hydrolysis of ATP in the presence of single-stranded DNA, the ATP-dependent uptake of single-stranded DNA by duplex DNA, and the ATP-dependent hybridization of homologous single-stranded DNAs. It interacts with LexA causing its activation and leading to its autocatalytic cleavage. This is Protein RecA from Xanthomonas oryzae pv. oryzae (strain PXO99A).